We begin with the raw amino-acid sequence, 356 residues long: Phosphoserine aminotransferase (356 aa).

Arg41 is a binding site for L-glutamate. Residues 75–76 (AT), Trp100, Thr147, Asp166, and Gln189 each bind pyridoxal 5'-phosphate. Position 190 is an N6-(pyridoxal phosphate)lysine (Lys190). 227-228 (NT) is a pyridoxal 5'-phosphate binding site.

The protein belongs to the class-V pyridoxal-phosphate-dependent aminotransferase family. SerC subfamily. In terms of assembly, homodimer. Pyridoxal 5'-phosphate serves as cofactor.

It localises to the cytoplasm. The enzyme catalyses O-phospho-L-serine + 2-oxoglutarate = 3-phosphooxypyruvate + L-glutamate. The catalysed reaction is 4-(phosphooxy)-L-threonine + 2-oxoglutarate = (R)-3-hydroxy-2-oxo-4-phosphooxybutanoate + L-glutamate. It functions in the pathway amino-acid biosynthesis; L-serine biosynthesis; L-serine from 3-phospho-D-glycerate: step 2/3. Functionally, catalyzes the reversible conversion of 3-phosphohydroxypyruvate to phosphoserine and of 3-hydroxy-2-oxo-4-phosphonooxybutanoate to phosphohydroxythreonine. This chain is Phosphoserine aminotransferase, found in Exiguobacterium sp. (strain ATCC BAA-1283 / AT1b).